Reading from the N-terminus, the 130-residue chain is Protein YchQ (130 aa).

Topologically, residues 1–9 (MTSFSTLLS) are periplasmic. A helical membrane pass occupies residues 10–28 (VHLISIALSVGLLTLRFWL). Residues 29–39 (RYQKHPQAFAR) lie on the Cytoplasmic side of the membrane. Residues 40 to 59 (WTRIVPPVVDTLLLLSGIAL) form a helical membrane-spanning segment. Over 60-73 (MAKAHILPFSGQAQ) the chain is Periplasmic. The helical transmembrane segment at 74–93 (WLTEKLFGVIIYIVLGFIAL) threads the bilayer. The Cytoplasmic portion of the chain corresponds to 94 to 104 (DYRRMHSQQAR). The helical transmembrane segment at 105–124 (IIAFPLALVVLYIIIKLATT) threads the bilayer. Residues 125-130 (KVPLLG) are Periplasmic-facing.

It belongs to the SirB2 family.

It localises to the cell inner membrane. In Escherichia coli (strain K12), this protein is Protein YchQ (ychQ).